A 362-amino-acid chain; its full sequence is MTQPIRDSLGRPLRDLRISVTDRCNMRCRYCMPREIFGPNFTFLPRSELLTFEEITRIAAAFIRAGVRKIRLTGGEPLLRADLPRLVAMLADLPDVHDLALTTNGSLLARYARPLRDAGLRRVTVSLDTLNPATFSRLADTDIPLDNVLAGIDAAQSAGFFPIKLNAVIRRGVNDGDVEELAAFARDNGHIMRFIEYMDVGNSNGWRAADVVPAAEIIARISSHWPIDPLPPRYPGEVANRFRYRDGRGEFGVIASITQPFCRDCTRLRLSAVGEVFTCLFAVRGHDLRSIVRSNTDSAAIDAALDEAITRIWSRRSDRYSELRALDSDGSREDADESEASAVPGRSTHPGHRKVEMSYIGG.

A Radical SAM core domain is found at 8–228 (SLGRPLRDLR…ARISSHWPID (221 aa)). Arg-17 is a GTP binding site. Cys-24 and Cys-28 together coordinate [4Fe-4S] cluster. Tyr-30 is a binding site for S-adenosyl-L-methionine. Cys-31 contributes to the [4Fe-4S] cluster binding site. Arg-71 is a binding site for GTP. Position 75 (Gly-75) interacts with S-adenosyl-L-methionine. Thr-102 is a binding site for GTP. Residue Ser-126 participates in S-adenosyl-L-methionine binding. A GTP-binding site is contributed by Lys-164. Met-198 serves as a coordination point for S-adenosyl-L-methionine. Cys-262 and Cys-265 together coordinate [4Fe-4S] cluster. A GTP-binding site is contributed by 267–269 (RLR). Cys-279 contributes to the [4Fe-4S] cluster binding site. The segment at 325-362 (ALDSDGSREDADESEASAVPGRSTHPGHRKVEMSYIGG) is disordered.

Belongs to the radical SAM superfamily. MoaA family. As to quaternary structure, monomer and homodimer. The cofactor is [4Fe-4S] cluster.

It catalyses the reaction GTP + AH2 + S-adenosyl-L-methionine = (8S)-3',8-cyclo-7,8-dihydroguanosine 5'-triphosphate + 5'-deoxyadenosine + L-methionine + A + H(+). It participates in cofactor biosynthesis; molybdopterin biosynthesis. Catalyzes the cyclization of GTP to (8S)-3',8-cyclo-7,8-dihydroguanosine 5'-triphosphate. The polypeptide is GTP 3',8-cyclase (Acidothermus cellulolyticus (strain ATCC 43068 / DSM 8971 / 11B)).